The sequence spans 133 residues: Meiotically up-regulated gene 15 protein (133 aa).

It localises to the cytoplasm. The protein localises to the nucleus. Its function is as follows. Has a role in meiosis. The protein is Meiotically up-regulated gene 15 protein (mug15) of Schizosaccharomyces pombe (strain 972 / ATCC 24843) (Fission yeast).